A 417-amino-acid chain; its full sequence is MFNTKIEFSKYDPELWKAIDQEKNRQENHIELIASENYTSNYVMHVQGSQLTNKYAEGYPEKRYYGGCKYVDIIEKLAINRAKKLFNADYANVQPHSGSQANFAVYTALLNPGDTILGMKLSHGGHLTHGSSVNFSGKTYNVIGYGVDKKGNIDYQEILTLAKKYKPKMIIGGFSAYSGICNWSKMRDIADEINAYFVVDIAHVAGLIAANLYPNPIDYAHVVTSTTHKTLAGPRGGLILAKNGTNTFYKKINLSVFPGAQGGPLMHVIAAKAIAFKEALEPAFKIYQKQVIKNAQVMVQSFLKKDYQIVSGNTFNHLFLLDLTSKNITGQEADIALGKCNITVNKNTIPNDLRSPFITSGIRIGTPAVTKRGFKENEMLQISDWIVHILNNIKDKNSLLGIKNEVLKLCSKYPVYI.

(6S)-5,6,7,8-tetrahydrofolate-binding positions include Leu-121 and 125–127 (GHL). Lys-229 carries the N6-(pyridoxal phosphate)lysine modification. 355 to 357 (SPF) serves as a coordination point for (6S)-5,6,7,8-tetrahydrofolate.

The protein belongs to the SHMT family. As to quaternary structure, homodimer. Pyridoxal 5'-phosphate serves as cofactor.

Its subcellular location is the cytoplasm. The catalysed reaction is (6R)-5,10-methylene-5,6,7,8-tetrahydrofolate + glycine + H2O = (6S)-5,6,7,8-tetrahydrofolate + L-serine. It functions in the pathway one-carbon metabolism; tetrahydrofolate interconversion. It participates in amino-acid biosynthesis; glycine biosynthesis; glycine from L-serine: step 1/1. In terms of biological role, catalyzes the reversible interconversion of serine and glycine with tetrahydrofolate (THF) serving as the one-carbon carrier. This reaction serves as the major source of one-carbon groups required for the biosynthesis of purines, thymidylate, methionine, and other important biomolecules. Also exhibits THF-independent aldolase activity toward beta-hydroxyamino acids, producing glycine and aldehydes, via a retro-aldol mechanism. The sequence is that of Serine hydroxymethyltransferase from Buchnera aphidicola subsp. Schizaphis graminum (strain Sg).